The chain runs to 333 residues: Homocysteine S-methyltransferase 2 (333 aa).

The Hcy-binding domain maps to 8-327; the sequence is SMKDFLKQTG…TTIRAIHKRL (320 aa). Zn(2+)-binding residues include Cys-245, Cys-312, and Cys-313.

In terms of assembly, monomer. Zn(2+) serves as cofactor. As to expression, expressed predominantly in roots. Expressed in rosette leaves, cauline leaves and developing seeds.

It catalyses the reaction S-methyl-L-methionine + L-homocysteine = 2 L-methionine + H(+). In terms of biological role, catalyzes methyl transfer from S-methylmethionine (SMM) to adenosyl-L-homocysteine (AdoMet). SMM degradation (by HMT-1, HMT-2 and HMT-3) and biosynthesis (by MMT1) constitute the SMM cycle in plants, which is probably required to achieve short term control of AdoMet level. The polypeptide is Homocysteine S-methyltransferase 2 (HMT-2) (Arabidopsis thaliana (Mouse-ear cress)).